The following is a 76-amino-acid chain: Protein krueppel (76 aa).

2 C2H2-type zinc fingers span residues 11 to 33 (FECSECHKRFTRDHHLKTHLRLH) and 39 to 61 (YSCPHCPRHFVQVANLRRHLRVH).

This sequence belongs to the krueppel C2H2-type zinc-finger protein family.

The protein localises to the nucleus. Krueppel is a gap class segmentation protein. The chain is Protein krueppel (Kr) from Manduca sexta (Tobacco hawkmoth).